The primary structure comprises 206 residues: Macrophage immunometabolism regulator (206 aa).

This sequence belongs to the UNC119-binding protein family. Interacts with unc119 family proteins; interaction preferentially takes place when unc119 proteins are unliganded with myristoylated proteins.

Its subcellular location is the cytoplasm. It is found in the cell projection. It localises to the cilium. May play a role in immune regulation through regulation of the macrophage function. Involved in the recruitment of macrophages in response to injury. May also play a role in trafficking of proteins via its interaction with unc119 family cargo adapters. May play a role in ciliary membrane localization. In terms of biological role, regulates the macrophage function, by enhancing the resolution of inflammation and wound repair functions mediated by M2 macrophages. The regulation of macrophage function is, due at least in part, to the role of C5orf30 in regulating ability to inhibit glycolysis. Probably plays alaso a role in trafficking of proteins via its interaction with UNC119 and UNC119B cargo adapters: may help the release of UNC119 and UNC119B cargo or the recycling of UNC119 and UNC119B. May play a role in ciliary membrane localization via its interaction with UNC119B and protein transport into photoreceptor cells. This Danio rerio (Zebrafish) protein is Macrophage immunometabolism regulator (macir).